Here is a 79-residue protein sequence, read N- to C-terminus: Small integral membrane protein 40 (79 aa).

The chain crosses the membrane as a helical span at residues 35 to 55 (FFIFLALFLTLLMLEAAYKLL).

The protein localises to the membrane. This is Small integral membrane protein 40 from Homo sapiens (Human).